Here is a 289-residue protein sequence, read N- to C-terminus: ATP synthase subunit a (289 aa).

Helical transmembrane passes span 43-63 (AFHL…LLIF), 104-124 (IAPL…VDLI), 160-180 (FCVF…GGFI), 193-213 (IFVQ…TLIA), 232-252 (VFIL…GLGV), and 259-279 (AVFH…LTIV).

This sequence belongs to the ATPase A chain family. F-type ATPases have 2 components, CF(1) - the catalytic core - and CF(0) - the membrane proton channel. CF(1) has five subunits: alpha(3), beta(3), gamma(1), delta(1), epsilon(1). CF(0) has three main subunits: a(1), b(2) and c(9-12). The alpha and beta chains form an alternating ring which encloses part of the gamma chain. CF(1) is attached to CF(0) by a central stalk formed by the gamma and epsilon chains, while a peripheral stalk is formed by the delta and b chains.

It is found in the cell inner membrane. In terms of biological role, key component of the proton channel; it plays a direct role in the translocation of protons across the membrane. The polypeptide is ATP synthase subunit a (Pseudomonas putida (strain ATCC 47054 / DSM 6125 / CFBP 8728 / NCIMB 11950 / KT2440)).